A 443-amino-acid polypeptide reads, in one-letter code: Mitochondrial enolase superfamily member 1 (443 aa).

Residues 24–26 (GSD) and Y34 each bind substrate. The residue at position 148 (S148) is a Phosphoserine. A substrate-binding site is contributed by K220. Catalysis depends on K222, which acts as the Proton donor/acceptor. Residue D250 participates in Mg(2+) binding. Substrate is bound by residues N252, E276, E305, 355–357 (HAG), and E386. Mg(2+) is bound by residues E276 and E305. Residue H355 is part of the active site.

The protein belongs to the mandelate racemase/muconate lactonizing enzyme family. ENOSF1 subfamily. Mg(2+) serves as cofactor. In terms of processing, could be sumoylated.

The protein resides in the mitochondrion. It catalyses the reaction L-fuconate = 2-dehydro-3-deoxy-L-fuconate + H2O. Plays a role in the catabolism of L-fucose, a sugar that is part of the carbohydrates that are attached to cellular glycoproteins. Catalyzes the dehydration of L-fuconate to 2-keto-3-deoxy-L-fuconate by the abstraction of the 2-proton to generate an enediolate intermediate that is stabilized by the magnesium ion. May down-regulate thymidylate synthase activity, possibly already at the RNA level, by promoting the degradation of TYMS mRNA via an antisense RNA-based mechanism. This is Mitochondrial enolase superfamily member 1 (ENOSF1) from Bos taurus (Bovine).